The primary structure comprises 141 residues: HTH-type transcriptional repressor NsrR (141 aa).

In terms of domain architecture, HTH rrf2-type spans Q2 to E129. Residues I28–R51 constitute a DNA-binding region (H-T-H motif). Residues C91, C96, and C102 each contribute to the [2Fe-2S] cluster site.

The cofactor is [2Fe-2S] cluster.

Functionally, nitric oxide-sensitive repressor of genes involved in protecting the cell against nitrosative stress. May require iron for activity. The chain is HTH-type transcriptional repressor NsrR from Serratia proteamaculans (strain 568).